The chain runs to 159 residues: Putative 4-hydroxy-4-methyl-2-oxoglutarate aldolase (159 aa).

Substrate contacts are provided by residues 74–77 (GDNL) and Arg96. Asp97 serves as a coordination point for a divalent metal cation.

The protein belongs to the class II aldolase/RraA-like family. In terms of assembly, homotrimer. A divalent metal cation serves as cofactor.

The enzyme catalyses 4-hydroxy-4-methyl-2-oxoglutarate = 2 pyruvate. It catalyses the reaction oxaloacetate + H(+) = pyruvate + CO2. Functionally, catalyzes the aldol cleavage of 4-hydroxy-4-methyl-2-oxoglutarate (HMG) into 2 molecules of pyruvate. Also contains a secondary oxaloacetate (OAA) decarboxylase activity due to the common pyruvate enolate transition state formed following C-C bond cleavage in the retro-aldol and decarboxylation reactions. The polypeptide is Putative 4-hydroxy-4-methyl-2-oxoglutarate aldolase (Bacillus cereus (strain ZK / E33L)).